Here is a 193-residue protein sequence, read N- to C-terminus: Large ribosomal subunit protein uL18 (193 aa).

It belongs to the universal ribosomal protein uL18 family. In terms of assembly, part of the 50S ribosomal subunit. Contacts the 5S and 23S rRNAs.

This is one of the proteins that bind and probably mediate the attachment of the 5S RNA into the large ribosomal subunit, where it forms part of the central protuberance. The chain is Large ribosomal subunit protein uL18 from Methanococcus maripaludis (strain DSM 14266 / JCM 13030 / NBRC 101832 / S2 / LL).